A 373-amino-acid chain; its full sequence is tRNA-specific 2-thiouridylase MnmA (373 aa).

Residues 12–19 (GMSGGVDS) and M38 each bind ATP. Residues 98–100 (NPD) are interaction with target base in tRNA. C103 serves as the catalytic Nucleophile. A disulfide bond links C103 and C200. Residue G127 coordinates ATP. An interaction with tRNA region spans residues 150-152 (KDQ). C200 (cysteine persulfide intermediate) is an active-site residue. Positions 312–313 (RY) are interaction with tRNA.

This sequence belongs to the MnmA/TRMU family.

It localises to the cytoplasm. The enzyme catalyses S-sulfanyl-L-cysteinyl-[protein] + uridine(34) in tRNA + AH2 + ATP = 2-thiouridine(34) in tRNA + L-cysteinyl-[protein] + A + AMP + diphosphate + H(+). Its function is as follows. Catalyzes the 2-thiolation of uridine at the wobble position (U34) of tRNA, leading to the formation of s(2)U34. This chain is tRNA-specific 2-thiouridylase MnmA, found in Streptococcus pyogenes serotype M1.